We begin with the raw amino-acid sequence, 107 residues long: uncharacterized protein (107 aa).

A helical transmembrane segment spans residues 12–32; that stretch reads IILNIFLALLLVYFIFHCIYG.

It is found in the membrane. This is an uncharacterized protein from Rickettsia prowazekii (strain Madrid E).